Here is a 122-residue protein sequence, read N- to C-terminus: Large ribosomal subunit protein uL14 (122 aa).

Belongs to the universal ribosomal protein uL14 family. In terms of assembly, part of the 50S ribosomal subunit. Forms a cluster with proteins L3 and L19. In the 70S ribosome, L14 and L19 interact and together make contacts with the 16S rRNA in bridges B5 and B8.

Functionally, binds to 23S rRNA. Forms part of two intersubunit bridges in the 70S ribosome. This chain is Large ribosomal subunit protein uL14, found in Flavobacterium johnsoniae (strain ATCC 17061 / DSM 2064 / JCM 8514 / BCRC 14874 / CCUG 350202 / NBRC 14942 / NCIMB 11054 / UW101) (Cytophaga johnsonae).